We begin with the raw amino-acid sequence, 446 residues long: WEB family protein At3g56270 (446 aa).

Positions 313-349 (TNVSRIEILRKLEEANEEVKQSKQALEVALNRVEIAS) form a coiled coil.

It belongs to the WEB family.

This is WEB family protein At3g56270 from Arabidopsis thaliana (Mouse-ear cress).